Consider the following 62-residue polypeptide: UPF0434 protein RL4569 (62 aa).

The protein belongs to the UPF0434 family.

This Rhizobium johnstonii (strain DSM 114642 / LMG 32736 / 3841) (Rhizobium leguminosarum bv. viciae) protein is UPF0434 protein RL4569.